The sequence spans 290 residues: Protease HtpX homolog (290 aa).

2 helical membrane-spanning segments follow: residues 4–24 (ILLF…VASL) and 39–59 (TALL…SLLI). Position 144 (His-144) interacts with Zn(2+). Residue Glu-145 is part of the active site. His-148 contacts Zn(2+). 2 helical membrane-spanning segments follow: residues 159 to 179 (LIQG…GYAV) and 199 to 219 (VSTI…VAWF). Zn(2+) is bound at residue Glu-224.

The protein belongs to the peptidase M48B family. Zn(2+) is required as a cofactor.

The protein resides in the cell inner membrane. The chain is Protease HtpX homolog from Variovorax paradoxus (strain S110).